Reading from the N-terminus, the 99-residue chain is Nucleoid-associated protein SPy_1862/M5005_Spy1580 (99 aa).

It belongs to the YbaB/EbfC family. Homodimer.

It is found in the cytoplasm. The protein localises to the nucleoid. Binds to DNA and alters its conformation. May be involved in regulation of gene expression, nucleoid organization and DNA protection. The sequence is that of Nucleoid-associated protein SPy_1862/M5005_Spy1580 from Streptococcus pyogenes serotype M1.